We begin with the raw amino-acid sequence, 771 residues long: U-box domain-containing protein 6 (771 aa).

The 75-residue stretch at I274–T348 folds into the U-box domain. Residues E394 to V415 are disordered. A compositionally biased stretch (basic and acidic residues) spans E400–A411. 5 ARM repeats span residues E456–V499, N502–K542, K544–T581, S583–S622, and E625–T664. The span at E706–R722 shows a compositional bias: basic and acidic residues. The interval E706–R751 is disordered.

It catalyses the reaction S-ubiquitinyl-[E2 ubiquitin-conjugating enzyme]-L-cysteine + [acceptor protein]-L-lysine = [E2 ubiquitin-conjugating enzyme]-L-cysteine + N(6)-ubiquitinyl-[acceptor protein]-L-lysine.. Its pathway is protein modification; protein ubiquitination. In terms of biological role, functions as an E3 ubiquitin ligase. The protein is U-box domain-containing protein 6 (PUB6) of Arabidopsis thaliana (Mouse-ear cress).